An 854-amino-acid polypeptide reads, in one-letter code: Arsenate respiratory reductase molybdopterin-containing subunit ArrA (854 aa).

Residues 1-41 (MKKENQVNLGRRQLLKSTAAGTVLTGIGGTLSFTPIVEGIA) constitute a signal peptide (tat-type signal). Residues 54-110 (GEWLATTCQGCTSWCAKQIYVMDGRALKVRGNPNSGVHGMSSCPRQHLSLQQVYDPD) form the 4Fe-4S Mo/W bis-MGD-type domain. Residues cysteine 61, cysteine 64, cysteine 68, and cysteine 96 each coordinate [4Fe-4S] cluster. Arginine 165 is an arsenite binding site. Residue tyrosine 166 coordinates arsenate. Histidine 189 is a binding site for arsenite. An arsenate-binding site is contributed by serine 190. Cysteine 193 serves as a coordination point for Mo-bis(molybdopterin guanine dinucleotide). Lysine 198 serves as a coordination point for arsenate. Residue tyrosine 210 participates in arsenite binding.

Belongs to the prokaryotic molybdopterin-containing oxidoreductase family. Heterodimer composed of one large subunit (ArrA) and one small subunit (ArrB). Requires [4Fe-4S] cluster as cofactor. The cofactor is Mo-bis(molybdopterin guanine dinucleotide). Post-translationally, predicted to be exported by the Tat system. The position of the signal peptide cleavage has not been experimentally proven.

It localises to the periplasm. It carries out the reaction arsenite + A + H2O = arsenate + AH2 + H(+). With respect to regulation, phosphate is a competitive inhibitor. Its function is as follows. Component of the arsenate respiratory reductase (Arr) complex, which catalyzes the reduction of arsenate (As(V)) to arsenite (As(III)). ArrA is the arsenate-binding subunit. The periplasmic localization of this complex may allow the cell to couple arsenate reduction to energy production before arsenate can be transported to the cell cytoplasm and enter the ars detoxification pathway, an energy-requiring process. The protein is Arsenate respiratory reductase molybdopterin-containing subunit ArrA of Shewanella sp. (strain ANA-3).